We begin with the raw amino-acid sequence, 1969 residues long: Hybrid signal transduction histidine kinase B (1969 aa).

The segment covering 1–10 has biased composition (polar residues); the sequence is MEKSEQTNSF. Disordered regions lie at residues 1–91, 218–335, 412–436, 468–505, and 551–598; these read MEKS…HETK, KINE…KTKQ, QQQQ…SSDK, NNIN…KNKL, and GSGG…YNNN. Over residues 11-55 the composition is skewed to low complexity; that stretch reads ESSNNNNNNIDSNINNNLENNNNKNNNNNNNNNNNNNNNNNNIEN. Residues 56 to 65 are compositionally biased toward basic and acidic residues; the sequence is SIDKNNKEDN. Residues 72-86 show a composition bias toward basic residues; it reads SHRKHRTRLKSKKGN. The segment covering 242–252 has biased composition (polar residues); sequence TNSSILKSSEQ. The segment covering 280–292 has biased composition (low complexity); sequence SSSSDEGSDNSKS. The segment covering 293–304 has biased composition (polar residues); that stretch reads QHSSVNTPTLSR. Over residues 313–335 the composition is skewed to low complexity; sequence SQQSQKQSQQQSQQPQQQNKTKQ. Residues 416-425 show a composition bias toward basic residues; that stretch reads QHHRHYHHHI. The segment covering 469–492 has biased composition (polar residues); it reads NINIQAPSTPVQSRNYPLFTTQSP. A compositionally biased stretch (gly residues) spans 551-571; that stretch reads GSGGGGSGGGGGGGGGGGGIG. Residues 574 to 598 are compositionally biased toward low complexity; the sequence is SSFLDDNNNLNNGENFKNSNSYNNN. Helical transmembrane passes span 660–680, 684–704, 708–728, 747–767, and 795–815; these read AYIL…STIL, EWFI…LGKI, MYLI…TSII, LVMI…VILI, and FGEL…YTIL. A Histidine kinase domain is found at 967 to 1188; sequence TVSHELRTPI…TFSFTIPCGI (222 aa). A Phosphohistidine; by autocatalysis modification is found at His-970. 4 disordered regions span residues 1359–1415, 1521–1563, 1617–1709, and 1755–1832; these read ASKD…HQLI, GIAL…TTQS, NNNF…SSHS, and QKPQ…TAAA. Residues 1373–1398 are compositionally biased toward gly residues; the sequence is GDGGRSLSGGGGGVGSNGNGNGGGGL. Low complexity-rich tracts occupy residues 1399–1410 and 1527–1549; these read DSNISPSELSSS and SSSK…SPNS. Composition is skewed to polar residues over residues 1554–1563 and 1626–1665; these read ELGNGKTTQS and KPST…SPHR. 2 stretches are compositionally biased toward low complexity: residues 1755–1774 and 1781–1821; these read QKPQ…TSTQ and KTTT…TTTT. The Response regulatory domain maps to 1840-1967; the sequence is KILLVEDNFV…DILIQMIKKH (128 aa). Asp-1889 carries the post-translational modification 4-aspartylphosphate.

The protein resides in the membrane. It catalyses the reaction ATP + protein L-histidine = ADP + protein N-phospho-L-histidine.. In terms of biological role, acts in the cytokinin signal transduction pathway that regulates spore germination. Required for the maintenance of spore dormancy. Does not appear to act as a cytokinin receptor. Probably undergoes ATP-dependent autophosphorylation at a conserved histidine residue in the kinase core, which is followed by transfer of the phosphoryl group to a conserved aspartate residue in the receiver domain. The protein is Hybrid signal transduction histidine kinase B (dhkB) of Dictyostelium discoideum (Social amoeba).